A 309-amino-acid polypeptide reads, in one-letter code: Protein-L-isoaspartate O-methyltransferase 2 (309 aa).

Positions 23-28 match the Nuclear localization signal motif; it reads KKRKKK. Residue Ser144 is part of the active site.

It belongs to the methyltransferase superfamily. L-isoaspartyl/D-aspartyl protein methyltransferase family. Expressed in rosette leaves, stems, cauline leaves, flowers and developing seeds.

The protein localises to the nucleus. It carries out the reaction [protein]-L-isoaspartate + S-adenosyl-L-methionine = [protein]-L-isoaspartate alpha-methyl ester + S-adenosyl-L-homocysteine. In terms of biological role, catalyzes the methyl esterification of L-isoaspartyl residues in peptides and proteins that result from spontaneous decomposition of normal L-aspartyl and L-asparaginyl residues. It plays a role in the repair and/or degradation of damaged proteins. This chain is Protein-L-isoaspartate O-methyltransferase 2 (PIMT2), found in Arabidopsis thaliana (Mouse-ear cress).